The following is a 360-amino-acid chain: S-adenosylmethionine decarboxylase proenzyme (360 aa).

Catalysis depends on residues Glu13 and Glu16. Residue Ser73 is the Schiff-base intermediate with substrate; via pyruvic acid of the active site. A Pyruvic acid (Ser); by autocatalysis modification is found at Ser73. The Proton donor; for catalytic activity role is filled by Cys87. Active-site proton acceptor; for processing activity residues include Ser236 and His249.

Belongs to the eukaryotic AdoMetDC family. It depends on pyruvate as a cofactor. In terms of processing, is synthesized initially as an inactive proenzyme. Formation of the active enzyme involves a self-maturation process in which the active site pyruvoyl group is generated from an internal serine residue via an autocatalytic post-translational modification. Two non-identical subunits are generated from the proenzyme in this reaction, and the pyruvate is formed at the N-terminus of the alpha chain, which is derived from the carboxyl end of the proenzyme. The post-translation cleavage follows an unusual pathway, termed non-hydrolytic serinolysis, in which the side chain hydroxyl group of the serine supplies its oxygen atom to form the C-terminus of the beta chain, while the remainder of the serine residue undergoes an oxidative deamination to produce ammonia and the pyruvoyl group blocking the N-terminus of the alpha chain. In terms of tissue distribution, stolon, also expressed in leaves, stems and roots.

The catalysed reaction is S-adenosyl-L-methionine + H(+) = S-adenosyl 3-(methylsulfanyl)propylamine + CO2. It functions in the pathway amine and polyamine biosynthesis; S-adenosylmethioninamine biosynthesis; S-adenosylmethioninamine from S-adenosyl-L-methionine: step 1/1. This is S-adenosylmethionine decarboxylase proenzyme (SAMDC) from Solanum tuberosum (Potato).